The chain runs to 196 residues: V-type proton ATPase subunit E (196 aa).

This sequence belongs to the V-ATPase E subunit family.

Its function is as follows. Produces ATP from ADP in the presence of a proton gradient across the membrane. The polypeptide is V-type proton ATPase subunit E (Clostridium botulinum (strain Alaska E43 / Type E3)).